A 363-amino-acid polypeptide reads, in one-letter code: MNPVQQPAQQRSPASSLPHPKRAQEAPDMALYCDNFMYPQQSLHPSQRGPNFAIGEYTSPANPYLWLGGHGVNNAPNYSPSPAPYMPPSFGAPQRQFLPNSPAFGGTELSWMSAASQEELLKMVRPPYSYSALIAMAIQHASDRRLTLSQIYQYVAENFPFYKKSKAGWQNSIRHNLSLNDCFKKVPRDENDPGKGNYWTLDPNCEKMFDNGNFRRKRKPKSDANSAKIAKIGEDHLNPKGKESPPMITPSSPEEPSPTGHSKSPSPPAVTYTPCLTNFIGSMTAVDAATANRQGPLGLLNELSQRNISSLSSFISGSAVDQSAEHPDTSLFYNRSPYYSSFPTTAQKQPQFLQQPPLYQGRY.

Positions 1–18 (MNPVQQPAQQRSPASSLP) are enriched in low complexity. 3 disordered regions span residues 1–24 (MNPVQQPAQQRSPASSLPHPKRAQ), 210–269 (DNGN…SPPA), and 344–363 (TTAQKQPQFLQQPPLYQGRY). The fork-head DNA-binding region spans 125-219 (RPPYSYSALI…DNGNFRRKRK (95 aa)). A compositionally biased stretch (basic and acidic residues) spans 231 to 243 (KIGEDHLNPKGKE). Low complexity-rich tracts occupy residues 244-258 (SPPMITPSSPEEPSP) and 347-363 (QKQPQFLQQPPLYQGRY).

It localises to the nucleus. Its function is as follows. Transcription factor. Essential for ventral specification of the early cephalic (head) ectoderm during gastrulation, playing a role in the 'non-neural' versus 'neural' cell fate choice. Binds to DNA via the target sequence 5'-[AG]TAAA[CT]A-3', with 5'-ATAAACA-3' being the preferred binding site. This Xenopus tropicalis (Western clawed frog) protein is Forkhead box protein I1.